The primary structure comprises 145 residues: uncharacterized protein (145 aa).

Residues 16 to 36 (VLAYLLQLSASLVLPVAIWLI) form a helical membrane-spanning segment.

It localises to the mitochondrion membrane. This is an uncharacterized protein from Arabidopsis thaliana (Mouse-ear cress).